We begin with the raw amino-acid sequence, 275 residues long: Translation initiation factor 2 subunit alpha (275 aa).

The 72-residue stretch at 12 to 83 (GEFVVATVKR…RKGHIDLSLR (72 aa)) folds into the S1 motif domain.

The protein belongs to the eIF-2-alpha family. Heterotrimer composed of an alpha, a beta and a gamma chain.

In terms of biological role, eIF-2 functions in the early steps of protein synthesis by forming a ternary complex with GTP and initiator tRNA. The chain is Translation initiation factor 2 subunit alpha (eif2a) from Pyrococcus horikoshii (strain ATCC 700860 / DSM 12428 / JCM 9974 / NBRC 100139 / OT-3).